Here is a 286-residue protein sequence, read N- to C-terminus: 4-hydroxy-tetrahydrodipicolinate synthase (286 aa).

Thr42 lines the pyruvate pocket. Tyr129 (proton donor/acceptor) is an active-site residue. Catalysis depends on Lys157, which acts as the Schiff-base intermediate with substrate. Residue Val196 coordinates pyruvate.

The protein belongs to the DapA family. Homotetramer; dimer of dimers.

It localises to the cytoplasm. The catalysed reaction is L-aspartate 4-semialdehyde + pyruvate = (2S,4S)-4-hydroxy-2,3,4,5-tetrahydrodipicolinate + H2O + H(+). It functions in the pathway amino-acid biosynthesis; L-lysine biosynthesis via DAP pathway; (S)-tetrahydrodipicolinate from L-aspartate: step 3/4. Functionally, catalyzes the condensation of (S)-aspartate-beta-semialdehyde [(S)-ASA] and pyruvate to 4-hydroxy-tetrahydrodipicolinate (HTPA). This is 4-hydroxy-tetrahydrodipicolinate synthase from Chlamydia muridarum (strain MoPn / Nigg).